Consider the following 357-residue polypeptide: UDP-N-acetylglucosamine--N-acetylmuramyl-(pentapeptide) pyrophosphoryl-undecaprenol N-acetylglucosamine transferase (357 aa).

Residues 12–14 (TGG), Asn-124, Arg-163, Ser-189, Ile-243, 262–267 (ALTVSE), and Gln-288 each bind UDP-N-acetyl-alpha-D-glucosamine.

This sequence belongs to the glycosyltransferase 28 family. MurG subfamily.

The protein resides in the cell inner membrane. It carries out the reaction di-trans,octa-cis-undecaprenyl diphospho-N-acetyl-alpha-D-muramoyl-L-alanyl-D-glutamyl-meso-2,6-diaminopimeloyl-D-alanyl-D-alanine + UDP-N-acetyl-alpha-D-glucosamine = di-trans,octa-cis-undecaprenyl diphospho-[N-acetyl-alpha-D-glucosaminyl-(1-&gt;4)]-N-acetyl-alpha-D-muramoyl-L-alanyl-D-glutamyl-meso-2,6-diaminopimeloyl-D-alanyl-D-alanine + UDP + H(+). It functions in the pathway cell wall biogenesis; peptidoglycan biosynthesis. Cell wall formation. Catalyzes the transfer of a GlcNAc subunit on undecaprenyl-pyrophosphoryl-MurNAc-pentapeptide (lipid intermediate I) to form undecaprenyl-pyrophosphoryl-MurNAc-(pentapeptide)GlcNAc (lipid intermediate II). This is UDP-N-acetylglucosamine--N-acetylmuramyl-(pentapeptide) pyrophosphoryl-undecaprenol N-acetylglucosamine transferase from Pseudomonas paraeruginosa (strain DSM 24068 / PA7) (Pseudomonas aeruginosa (strain PA7)).